Consider the following 240-residue polypeptide: MALEKSLETGDGQEKVRKQTAVYVYEAPLRLWHWVTALSIVVLGVTGYFIGAPLPTMPGEAMDNYLMGYIRFAHFAAGYVLAIGFLGRVYWAFVGNHHARELFLVPVHRKAWWKELWHEVRWYLFLEKVPKKYIGHNPLGQLAMFCFFVIGAVFMSVTGFALYAEGLGQGSWADRLFGWVIPLFGQSQDVHTWHHLGMWYLVVFVMIHVYLAAREDIVSRQSLISTMVGGWRMFKDDRPD.

The next 4 helical transmembrane spans lie at 31–51 (LWHW…YFIG), 75–95 (FAAG…AFVG), 142–163 (LAMF…FALY), and 196–213 (LGMW…YLAA).

It belongs to the HupC/HyaC/HydC family.

The protein resides in the cell membrane. In terms of biological role, probable b-type cytochrome. This Azotobacter chroococcum mcd 1 protein is Probable Ni/Fe-hydrogenase B-type cytochrome subunit (hupZ).